The chain runs to 61 residues: Small ribosomal subunit protein uS14 (61 aa).

4 residues coordinate Zn(2+): C24, C27, C40, and C43.

This sequence belongs to the universal ribosomal protein uS14 family. Zinc-binding uS14 subfamily. As to quaternary structure, part of the 30S ribosomal subunit. Contacts proteins S3 and S10. The cofactor is Zn(2+).

In terms of biological role, binds 16S rRNA, required for the assembly of 30S particles and may also be responsible for determining the conformation of the 16S rRNA at the A site. The protein is Small ribosomal subunit protein uS14 of Brevibacillus brevis (strain 47 / JCM 6285 / NBRC 100599).